Reading from the N-terminus, the 794-residue chain is Protein sel-1 homolog 1 (794 aa).

The N-terminal stretch at Met1 to Ala21 is a signal peptide. Residues Ala21–Thr50 are disordered. The tract at residues Ser22–Gln737 is interaction with ERLEC1, OS9 and SYVN1. The Lumenal portion of the chain corresponds to Ser22–Leu738. Residues Ser23–Ser32 show a composition bias toward acidic residues. Ser63 carries the phosphoserine modification. Acidic residues predominate over residues Glu64–Asp77. The disordered stretch occupies residues Glu64 to Lys109. Positions Ala122–Thr170 constitute a Fibronectin type-II domain. Cystine bridges form between Cys127–Cys153 and Cys141–Cys168. Sel1-like repeat units lie at residues Ala183 to His218, Thr219 to Ser254, Pro255 to Asn290, Leu291 to Ala326, Val373 to Asn409, Ser410 to Asn446, Pro447 to Trp482, Val483 to His518, and Ile519 to Arg554. Asn195 and Asn217 each carry an N-linked (GlcNAc...) asparagine glycan. A glycan (N-linked (GlcNAc...) asparagine) is linked at Asn272. The interval Asn352–Arg537 is important for homodimerization and oligomerization. Asn431 carries N-linked (GlcNAc...) asparagine glycosylation. N-linked (GlcNAc...) asparagine glycosylation is present at Asn608. Sel1-like repeat units follow at residues Thr627 to His662 and Ala664 to Pro699. Residues Thr643–Glu723 form an interaction with SYVN1 region. The segment at Leu738–Gln794 is mediates retention in the endoplasmic reticulum. The helical transmembrane segment at Leu739 to Ile759 threads the bilayer. Residues Ala760–Gln794 are Cytoplasmic-facing. Residues His766–Gln794 are disordered. Over residues Ala771–Gln794 the composition is skewed to pro residues.

This sequence belongs to the sel-1 family. As to quaternary structure, homodimer and homooligomer. May form a complex with ERLEC1, HSPA5, OS9, and SYVN1. Interacts with FOXRED2 and EDEM1. Interacts with LPL. Interacts with LMF1; may stabilize the complex formed by LPL and LMF1 and thereby promote the export of LPL dimers. Component of the HRD1 complex, which comprises at least SYNV1/HRD1, DERL1/2, FAM8A1, HERPUD1/HERP, OS9, SEL1L and UBE2J1. SYNV1 assembles with SEL1L and FAM8A1 through its transmembrane domains, but interaction with its cytoplasmic domain is required to confer stability to FAM8A1 and enhance recruitment of HERPUD1. The interaction with SYNV1/HRD1 is direct. In terms of assembly, (Microbial infection) Interacts with human cytomegalovirus protein UL148. N-glycosylated. In terms of tissue distribution, highly expressed in pancreas.

It localises to the endoplasmic reticulum membrane. In terms of biological role, plays a role in the endoplasmic reticulum quality control (ERQC) system also called ER-associated degradation (ERAD) involved in ubiquitin-dependent degradation of misfolded endoplasmic reticulum proteins. Enhances SYVN1 stability. Plays a role in LPL maturation and secretion. Required for normal differentiation of the pancreas epithelium, and for normal exocrine function and survival of pancreatic cells. May play a role in Notch signaling. The polypeptide is Protein sel-1 homolog 1 (Homo sapiens (Human)).